We begin with the raw amino-acid sequence, 300 residues long: Protoheme IX farnesyltransferase (300 aa).

Transmembrane regions (helical) follow at residues 24–44 (VTQL…PGMV), 46–66 (WHVL…AFAI), 94–114 (PQIL…LYTF), 118–138 (LTMW…TLLL), 146–166 (IVIG…AVTG), 172–192 (AWIL…VLAL), 224–244 (VILF…VVYL), and 278–298 (IVYL…RPLL).

Belongs to the UbiA prenyltransferase family. Protoheme IX farnesyltransferase subfamily.

It localises to the cell inner membrane. The enzyme catalyses heme b + (2E,6E)-farnesyl diphosphate + H2O = Fe(II)-heme o + diphosphate. It functions in the pathway porphyrin-containing compound metabolism; heme O biosynthesis; heme O from protoheme: step 1/1. In terms of biological role, converts heme B (protoheme IX) to heme O by substitution of the vinyl group on carbon 2 of heme B porphyrin ring with a hydroxyethyl farnesyl side group. The protein is Protoheme IX farnesyltransferase of Burkholderia ambifaria (strain MC40-6).